A 518-amino-acid chain; its full sequence is Nitrogenase iron-iron protein alpha chain (518 aa).

Cys49 and Cys75 together coordinate [8Fe-7S] cluster. [8Fe-9S-C-homocitryl] cluster is bound by residues Cys257 and His423.

In terms of assembly, hexamer of two alpha, two beta, and two delta chains. The cofactor is [8Fe-7S] cluster. [8Fe-9S-C-homocitryl] cluster is required as a cofactor.

The catalysed reaction is N2 + 8 reduced [2Fe-2S]-[ferredoxin] + 16 ATP + 16 H2O = H2 + 8 oxidized [2Fe-2S]-[ferredoxin] + 2 NH4(+) + 16 ADP + 16 phosphate + 6 H(+). Functionally, this iron-iron protein is part of the nitrogenase complex that catalyzes the key enzymatic reactions in nitrogen fixation. Other nitrogenase complexes utilize a molybdenum-iron protein or a vanadium-iron protein. This is Nitrogenase iron-iron protein alpha chain (anfD) from Ruminiclostridium hungatei (Clostridium hungatei).